The following is a 218-amino-acid chain: Mitochondrial fission factor (218 aa).

The Cytoplasmic portion of the chain corresponds to 1–198 (MAEISRIQYE…ENKERAKREM (198 aa)). Thr-89 bears the Phosphothreonine mark. Phosphoserine is present on residues Ser-129, Ser-131, Ser-146, and Ser-171. Residues 167-198 (VDAASLRRQIIKLNRRLQLLEEENKERAKREM) adopt a coiled-coil conformation. A helical; Anchor for type IV membrane protein membrane pass occupies residues 199 to 216 (VMYSITVAFWLLNSWLWF). Residues 217-218 (RR) are Mitochondrial intermembrane-facing.

It belongs to the Tango11 family. In terms of assembly, homodimer. Interacts with DNM1L. Interacts with C11orf65/MFI; the interaction inhibits MFF interaction with DNM1L.

The protein localises to the mitochondrion outer membrane. Its subcellular location is the peroxisome. It localises to the cytoplasmic vesicle. It is found in the secretory vesicle. The protein resides in the synaptic vesicle. Its function is as follows. Plays a role in mitochondrial and peroxisomal fission. Promotes the recruitment and association of the fission mediator dynamin-related protein 1 (DNM1L) to the mitochondrial surface. May be involved in regulation of synaptic vesicle membrane dynamics by recruitment of DNM1L to clathrin-containing vesicles. The chain is Mitochondrial fission factor (Mff) from Rattus norvegicus (Rat).